Here is a 419-residue protein sequence, read N- to C-terminus: MNKIKVFKKNFFFEKIKNKKNNIEIKKSTNDSTSNTCTDIKNNIIIENKINEENIENNNNINIGNNSVNNNNINNNNNSINNNNNNNNKNKNKNNNSYIPMIQYSNIHCIDWSSLISVDKLDLGSSNIFLIATFLNNKCEYNQVLLKSSTTIVQEVYASVLESILKLPIPEMRLLEYSNDEYIQMSRSLLTISSKTNKSLYDYIKLELLKSFFLIMEYAPNGKSFKDLDYKEYFSGYGGEKKLNQLGQVIAFDIFCNNSDRLPLIWDNVSSHFSNILFYDIPNRNGWYISLMNSNVTCINNSSFTIGYRKYITRVKSILYALFKRPNIESNQIKKMRESISKSYKINLSSSCGISIQRGIIQGVQLIISRISISILSDTKEKLRHLVKVDSTTNAWKKGLDSIHLPFLSDLLDTMVLFY.

The disordered stretch occupies residues 73–94 (INNNNNSINNNNNNNNKNKNKN).

This sequence belongs to the protein kinase superfamily. AFK Ser/Thr protein kinase family.

The sequence is that of Putative actin-fragmin kinase DDB_G0279609 from Dictyostelium discoideum (Social amoeba).